The following is a 422-amino-acid chain: MQLSPERCRPMSENREAWSANSEEMELLHGSNRLSSPEHVRRRVSGNSSEDGSPRICRQQSFGRDIGHAAAETYLITRLSFNLLGYLGVGYRWITRLLALACYAMLLMPGFLQVAYLYFFSSQVRRSIVYGGHPRNRLDLYIPPTSDGLKPVVVFVTGGAWIIGYKAWGSLLGLQLAERDIIVACLDYRNFPQGTISDMVSDAAQGISFVCNNISAFGGDPNRIYLMGQSAGAHISSCALFEQAIKESRGESISWSVSQIKAYFGLSGGYNLFNLVEHFHNRGLYRSIFLSIMEGEESFKQFSPEVRLKDLNVRKAAALLPHIILFHGSADYSIPPEASKTFTDALQAAEVKAELVMYKGKTHTDLFLQDPLRGGKDELFDHIVSMIHADDSDALRNDAVAPPRKRLVPEFLLKLAGRVSPF.

The span at 1 to 16 (MQLSPERCRPMSENRE) shows a compositional bias: basic and acidic residues. The segment at 1-55 (MQLSPERCRPMSENREAWSANSEEMELLHGSNRLSSPEHVRRRVSGNSSEDGSPR) is disordered. Transmembrane regions (helical) follow at residues 97-117 (LLAL…VAYL) and 152-172 (VVVF…GSLL). Residues 158 to 160 (GGA) and 229 to 231 (QSA) contribute to the substrate site. Residues S230, D331, and H363 contribute to the active site.

It belongs to the AB hydrolase superfamily. Isoprenylcysteine methylesterase family. Expressed at low levels in flowers and siliques.

It localises to the endoplasmic reticulum membrane. The protein localises to the golgi apparatus membrane. The enzyme catalyses [protein]-C-terminal S-[(2E,6E)-farnesyl]-L-cysteine methyl ester + H2O = [protein]-C-terminal S-[(2E,6E)-farnesyl]-L-cysteine + methanol + H(+). In terms of biological role, catalyzes the demethylation of isoprenylcysteine methylesters. May act as a negative regulator of ABA signaling. This is Probable isoprenylcysteine alpha-carbonyl methylesterase ICMEL2 from Arabidopsis thaliana (Mouse-ear cress).